The following is a 345-amino-acid chain: Putative [LysW]-L-2-aminoadipate/[LysW]-L-glutamate phosphate reductase (345 aa).

NADP(+) is bound at residue 11-14; that stretch reads SGFT. Residues 34-56 are disordered; that stretch reads TSRSKENKTIGHSHPNLRHSDLR. Cysteine 146 is a catalytic residue. An NADP(+)-binding site is contributed by asparagine 309.

Belongs to the NAGSA dehydrogenase family. Type 1 subfamily. LysY sub-subfamily.

The protein resides in the cytoplasm. It catalyses the reaction [amino-group carrier protein]-C-terminal-N-(1-carboxy-5-oxopentan-1-yl)-L-glutamine + phosphate + NADP(+) = [amino-group carrier protein]-C-terminal-N-(1-carboxy-5-phosphooxy-5-oxopentan-1-yl)-L-glutamine + NADPH + H(+). The enzyme catalyses [amino-group carrier protein]-C-terminal-gamma-(L-glutamyl-5-semialdehyde)-L-glutamate + phosphate + NADP(+) = [amino-group carrier protein]-C-terminal-gamma-(5-phospho-L-glutamyl)-L-glutamate + NADPH + H(+). It functions in the pathway amino-acid biosynthesis; L-lysine biosynthesis via AAA pathway; L-lysine from L-alpha-aminoadipate (Thermus route): step 3/5. It participates in amino-acid biosynthesis; L-arginine biosynthesis. Functionally, involved in both the arginine and lysine biosynthetic pathways. This is Putative [LysW]-L-2-aminoadipate/[LysW]-L-glutamate phosphate reductase from Haloarcula marismortui (strain ATCC 43049 / DSM 3752 / JCM 8966 / VKM B-1809) (Halobacterium marismortui).